The following is a 417-amino-acid chain: MRVVILGSGVIGVTSAWYLAQAGHQVTVVDRQEGPGLETSAANAGQISPGYAAPWAAPGIPLKALKWLFQRHAPLAMSLDGSLFQLRWLWQMLRNCDSTHYAQNKARMVRLAEYSRDCLAQLRRTTTIDYEGRQLGTLQLFRTPQQYENAARDIAVLREAGVPYRLLPTAQLSTVEPALAVAGVRLSGGLHLPHDETGDCQLFTRHLAQQAAQSGVHFIFSTQVLRLLRSGARIQGVQCGHDTLVADAYVVALGAYSTGLLQDIVAIPVYPLKGYSLTLPIDDPDAAPRSTVLDESYKVAITRFDRRIRVGGMAEVVGFDMSLPLARRRTLERVVRDLYPRGGLLPQASFWSGLRPATPDGTPLVGATPLENLYLNTGHGTLGWTMACGSGQLLADIISGVTPTIRVDDLSVSRYTA.

Residue 3–17 (VVILGSGVIGVTSAW) participates in FAD binding.

Belongs to the DadA oxidoreductase family. FAD is required as a cofactor.

It catalyses the reaction a D-alpha-amino acid + A + H2O = a 2-oxocarboxylate + AH2 + NH4(+). The protein operates within amino-acid degradation; D-alanine degradation; NH(3) and pyruvate from D-alanine: step 1/1. Oxidative deamination of D-amino acids. The protein is D-amino acid dehydrogenase of Edwardsiella ictaluri (strain 93-146).